Reading from the N-terminus, the 120-residue chain is Transcription elongation factor SPT4 (120 aa).

Positions 1–39 are interaction with spt-5; the sequence is MAASIPSDLRNLRACLLCSLIKSVDAFQTDGCENCDEVL. The C4-type zinc-finger motif lies at 15–35; it reads CLLCSLIKSVDAFQTDGCENC.

This sequence belongs to the SPT4 family. Interacts with spt-5 to form DSIF. DSIF interacts with RNA polymerase II and with the positive transcription elongation factor b complex (P-TEFb complex), which is composed of cdk-9 and cyclin-T.

It is found in the nucleus. May function as a component of the DRB sensitivity-inducing factor complex (DSIF complex), which regulates transcription elongation by RNA polymerase II. DSIF may enhance transcriptional pausing at sites proximal to the promoter, which may in turn facilitate the assembly of an elongation competent RNA polymerase II complex. The chain is Transcription elongation factor SPT4 (spt-4) from Caenorhabditis briggsae.